Here is a 225-residue protein sequence, read N- to C-terminus: UPF0758 protein Ping_0056 (225 aa).

The region spanning 103-225 is the MPN domain; that stretch reads ALTSAAQTKA…CTSFAENGWI (123 aa). Zn(2+)-binding residues include His174, His176, and Asp187. A JAMM motif motif is present at residues 174 to 187; sequence HNHPSGDPSASEAD.

It belongs to the UPF0758 family.

This chain is UPF0758 protein Ping_0056, found in Psychromonas ingrahamii (strain DSM 17664 / CCUG 51855 / 37).